The following is a 1085-amino-acid chain: Solute carrier family 12 member 4 (1085 aa).

Over 1 to 119 the chain is Cytoplasmic; sequence MPHFTVVPVD…RRAAKAPSMG (119 aa). A Phosphoserine modification is found at Ser-24. Positions 28 to 46 are enriched in basic and acidic residues; sequence YGERAEREDPDGHGNHRES. The segment at 28 to 47 is disordered; that stretch reads YGERAEREDPDGHGNHRESS. Residues Ser-47, Ser-59, Ser-81, and Ser-88 each carry the phosphoserine modification. Residues 120–141 form a discontinuously helical membrane-spanning segment; sequence TLMGVYLPCLQNIFGVILFLRL. Asn-131 and Ile-132 together coordinate K(+). Residues 142–149 are Extracellular-facing; it reads TWMVGTAG. The chain crosses the membrane as a helical span at residues 150-172; sequence VLQALLIVLICCCCTLLTAISMS. Residues 173–196 lie on the Cytoplasmic side of the membrane; it reads AIATNGVVPAGGSYFMISRSLGPE. A helical membrane pass occupies residues 197–225; sequence FGGAVGLCFYLGTTFAAAMYILGAIEILL. Tyr-216 serves as a coordination point for K(+). Residues 226–248 lie on the Extracellular side of the membrane; it reads TYIAPPAAIFYPSGTHDTSNATL. The N-linked (GlcNAc...) asparagine glycan is linked to Asn-245. 2 consecutive transmembrane segments (helical) span residues 249-271 and 272-297; these read NNMR…VGVK and YVNK…GGIK. The Extracellular segment spans residues 298 to 419; that stretch reads SMFDPPVFPV…LYVVADIATS (122 aa). Cysteines 308 and 323 form a disulfide. N-linked (GlcNAc...) asparagine glycans are attached at residues Asn-312, Asn-331, and Asn-347. Residues Cys-343 and Cys-353 are joined by a disulfide bond. A helical transmembrane segment spans residues 420 to 440; sequence FTVLVGIFFPSVTGIMAGSNR. Pro-429 and Thr-432 together coordinate K(+). 3 residues coordinate chloride: Gly-433, Ile-434, and Met-435. Residues 441-450 lie on the Cytoplasmic side of the membrane; sequence SGDLRDAQKS. A helical transmembrane segment spans residues 451 to 473; that stretch reads IPVGTILAIVTTSLVYFSSVVLF. The Extracellular portion of the chain corresponds to 474–504; it reads GACIEGVVLRDKYGDGVSRNLVVGTLAWPSP. Residues 505–531 form a helical membrane-spanning segment; sequence WVIVVGSFFSTCGAGLQSLTGAPRLLQ. The Cytoplasmic portion of the chain corresponds to 532 to 554; the sequence is AIAKDNIIPFLRVFGHGKANGEP. The next 2 membrane-spanning stretches (helical) occupy residues 555–575 and 576–598; these read TWAL…ASLD and MVAP…ACAV. Residue Tyr-589 coordinates chloride. Over 599 to 612 the chain is Cytoplasmic; the sequence is QTLLRTPNWRPRFK. Helical transmembrane passes span 613–635 and 636–651; these read YYHW…VSSW and YYAL…IYKY. Over 652–1085 the chain is Cytoplasmic; it reads IEYQGAEKEW…GGREVITIYS (434 aa). The interval 665-681 is scissor helix; the sequence is IRGLSLSAARYALLRLE. Residues Leu-697, Lys-699, Lys-707, Tyr-708, and Val-730 each contribute to the ATP site. The residue at position 734 (Ser-734) is a Phosphoserine. ATP is bound by residues Gly-794, Trp-795, and Tyr-797. Residues Ser-916 and Ser-967 each carry the phosphoserine modification. Thr-983 carries the phosphothreonine modification. A Phosphoserine modification is found at Ser-1050.

The protein belongs to the SLC12A transporter family. K/Cl co-transporter subfamily. Homodimer; adopts a domain-swap conformation at the scissor helices connecting the transmembrane domain and C-terminal domain. Heterodimer with other K-Cl cotransporters. Post-translationally, N-glycosylated. Phosphorylated, phosphorylation may regulate transporter activity.

It is found in the cell membrane. The catalysed reaction is K(+)(in) + chloride(in) = K(+)(out) + chloride(out). With respect to regulation, inhibited by WNK3. In terms of biological role, mediates electroneutral potassium-chloride cotransport when activated by cell swelling. May contribute to cell volume homeostasis in single cells. May be involved in the regulation of basolateral Cl(-) exit in NaCl absorbing epithelia. The chain is Solute carrier family 12 member 4 (SLC12A4) from Oryctolagus cuniculus (Rabbit).